Here is a 247-residue protein sequence, read N- to C-terminus: Ubiquinone biosynthesis O-methyltransferase (247 aa).

S-adenosyl-L-methionine is bound by residues Arg-39, Gly-70, Asp-91, and Met-134.

This sequence belongs to the methyltransferase superfamily. UbiG/COQ3 family.

The enzyme catalyses a 3-demethylubiquinol + S-adenosyl-L-methionine = a ubiquinol + S-adenosyl-L-homocysteine + H(+). It catalyses the reaction a 3-(all-trans-polyprenyl)benzene-1,2-diol + S-adenosyl-L-methionine = a 2-methoxy-6-(all-trans-polyprenyl)phenol + S-adenosyl-L-homocysteine + H(+). Its pathway is cofactor biosynthesis; ubiquinone biosynthesis. O-methyltransferase that catalyzes the 2 O-methylation steps in the ubiquinone biosynthetic pathway. The protein is Ubiquinone biosynthesis O-methyltransferase of Cereibacter sphaeroides (strain ATCC 17023 / DSM 158 / JCM 6121 / CCUG 31486 / LMG 2827 / NBRC 12203 / NCIMB 8253 / ATH 2.4.1.) (Rhodobacter sphaeroides).